Consider the following 463-residue polypeptide: MAKNTKLWGGRFEGTVEDWVERFGASISFDQKLAKFDVIGSLAHVQMLGQTGILSLEESEKIQVGLKELLEELEAGQLDFDIANEDIHMNMEVLLTEKIGPLAGKLHTARSRNDQVATDMHLYLKEQLGYVLDKLAHLKGVLLDLAENHVATIMPGYTHLQHAQPISFAHHLMAYYNMFQRDSERFEFNQKHTDLCPLGAAALAGTTFPIDRQLSSDLLEFKQPYTNSLDAVSDRDFILEFLSNASILMMHMSRFCEEMINWCSFEYQFITLSDTFTIGSSIMPQKKNPDMAELIRGKTGRVYGHLFGLLTVMKSLPLAYNKDLQEDKEGMFDTVETILNSLDVLAGMLSSLQVNKEKMQESTEKDFSNATELADYLAGKGLPFREAHEVVGRLVLDSIKSAKNLQDWTLEELQTYHSLITEDIYVYLQPKTAVQRRNSLGGTGFDQVEYQIAVAKKANEAKK.

This sequence belongs to the lyase 1 family. Argininosuccinate lyase subfamily.

The protein localises to the cytoplasm. It catalyses the reaction 2-(N(omega)-L-arginino)succinate = fumarate + L-arginine. It participates in amino-acid biosynthesis; L-arginine biosynthesis; L-arginine from L-ornithine and carbamoyl phosphate: step 3/3. The chain is Argininosuccinate lyase from Streptococcus pneumoniae (strain 70585).